Consider the following 443-residue polypeptide: Carbohydrate sulfotransferase 9 (443 aa).

Residues 1–12 lie on the Cytoplasmic side of the membrane; sequence MQPSEMVMNPKQ. A helical; Signal-anchor for type II membrane protein transmembrane segment spans residues 13–33; the sequence is VFLSVLIFGVAGLLLFMYLQV. Over 34-443 the chain is Lumenal; the sequence is WIEEQHTGRV…LMFNYTTPFL (410 aa). Residues 108–128 are compositionally biased toward polar residues; that stretch reads LTKTSHSQGGDQALSKSTGSP. The interval 108-132 is disordered; the sequence is LTKTSHSQGGDQALSKSTGSPTEKL. Asn159 is a glycosylation site (N-linked (GlcNAc...) asparagine). 220–226 is a binding site for 3'-phosphoadenylyl sulfate; sequence PKAGCSN. A glycan (N-linked (GlcNAc...) asparagine) is linked at Asn243. Position 280–288 (280–288) interacts with 3'-phosphoadenylyl sulfate; sequence RDPMERLVS. 2 N-linked (GlcNAc...) asparagine glycosylation sites follow: Asn324 and Asn437.

It belongs to the sulfotransferase 2 family. In terms of tissue distribution, highly expressed in trachea. Also expressed in fetal lung, adult pancreas, testis and salivary gland. Expressed at low level in pituitary gland, apex of the heart, adult lung, prostate and mammary gland. Weakly or not expressed in heart, liver and spinal cord.

Its subcellular location is the golgi apparatus membrane. The protein localises to the secreted. Its function is as follows. Catalyzes the transfer of sulfate to position 4 of non-reducing N-acetylgalactosamine (GalNAc) residues in both N-glycans and O-glycans. Participates in biosynthesis of glycoprotein hormones lutropin and thyrotropin, by mediating sulfation of their carbohydrate structures. Has a higher activity toward carbonic anhydrase VI than toward lutropin. Only active against terminal GalNAcbeta1,GalNAcbeta. Isoform 2, but not isoform 1, is active toward chondroitin. The chain is Carbohydrate sulfotransferase 9 (CHST9) from Homo sapiens (Human).